Reading from the N-terminus, the 488-residue chain is Sucrose phosphorylase (488 aa).

Sucrose is bound by residues aspartate 50, histidine 88, 191-193, glutamate 233, 290-291, 341-344, and arginine 398; these read RLD, HD, and DLYQ. Aspartate 193 functions as the Nucleophile in the catalytic mechanism. The Proton donor role is filled by glutamate 233.

It belongs to the glycosyl hydrolase 13 family. Sucrose phosphorylase subfamily.

It catalyses the reaction sucrose + phosphate = D-fructose + alpha-D-glucose 1-phosphate. The sequence is that of Sucrose phosphorylase from Agrobacterium vitis (Rhizobium vitis).